A 1021-amino-acid polypeptide reads, in one-letter code: Translation initiation factor IF-2 (1021 aa).

Positions 50-422 (AFPAEGGSAS…RMGAMVPRGN (373 aa)) are disordered. Positions 57-71 (SASGGRPGGRPGPGN) are enriched in gly residues. Positions 75 to 95 (PAPPRPGLAPRPGPRPVPGRP) are enriched in pro residues. Over residues 96–112 (GPAARPGGPAAPSAPAA) the composition is skewed to low complexity. Residues 113–129 (PSAPAPGAPAASPPASQ) show a composition bias toward pro residues. Low complexity-rich tracts occupy residues 130-159 (PRPI…ASGP), 167-178 (GGPAAPGRARPG), and 187-196 (SAPSAPSAGG). The segment covering 198–208 (RPGPRPGPRPS) has biased composition (pro residues). The segment covering 219 to 233 (SAGPRQSAGQSGSGP) has biased composition (low complexity). Composition is skewed to pro residues over residues 234–254 (ASPP…PRPG) and 262–273 (RPSPGSMPPRPG). Gly residues-rich tracts occupy residues 275–291 (RPGG…GSGG) and 306–389 (GAPG…GGRG). The span at 390-401 (RPGRQRKSKRAK) shows a compositional bias: basic residues. The tr-type G domain occupies 514–686 (IRPPVVTVMG…IILTADASLD (173 aa)). Residues 523–530 (GHVDHGKT) are G1. 523 to 530 (GHVDHGKT) lines the GTP pocket. A G2 region spans residues 548–552 (GITQH). The G3 stretch occupies residues 573 to 576 (DTPG). Residues 573–577 (DTPGH) and 627–630 (NKVD) contribute to the GTP site. The tract at residues 627 to 630 (NKVD) is G4. Residues 663-665 (SAR) are G5.

This sequence belongs to the TRAFAC class translation factor GTPase superfamily. Classic translation factor GTPase family. IF-2 subfamily.

It localises to the cytoplasm. Functionally, one of the essential components for the initiation of protein synthesis. Protects formylmethionyl-tRNA from spontaneous hydrolysis and promotes its binding to the 30S ribosomal subunits. Also involved in the hydrolysis of GTP during the formation of the 70S ribosomal complex. The protein is Translation initiation factor IF-2 of Frankia alni (strain DSM 45986 / CECT 9034 / ACN14a).